A 326-amino-acid polypeptide reads, in one-letter code: DnaJ homolog subfamily B member 6 (326 aa).

A J domain is found at 3–69 (DYYEVLGVQK…KKRDIYDRFG (67 aa)). A disordered region spans residues 249–326 (ALPFQPTNTR…KKKKSTKGSY (78 aa)). S277 is modified (phosphoserine).

In terms of assembly, homooligomer.

It is found in the cytoplasm. The protein resides in the perinuclear region. The protein localises to the nucleus. Its function is as follows. Has a stimulatory effect on the ATPase activity of HSP70 in a dose-dependent and time-dependent manner and hence acts as a co-chaperone of HSP70. Plays an indispensable role in the organization of KRT8/KRT18 filaments. Acts as an endogenous molecular chaperone for neuronal proteins including huntingtin. Suppresses aggregation and toxicity of polyglutamine-containing, aggregation-prone proteins. Also reduces cellular toxicity and caspase-3 activity. This Gallus gallus (Chicken) protein is DnaJ homolog subfamily B member 6.